A 179-amino-acid chain; its full sequence is Large ribosomal subunit protein uL5 (179 aa).

This sequence belongs to the universal ribosomal protein uL5 family. As to quaternary structure, part of the 50S ribosomal subunit; part of the 5S rRNA/L5/L18/L25 subcomplex. Contacts the 5S rRNA and the P site tRNA. Forms a bridge to the 30S subunit in the 70S ribosome.

Functionally, this is one of the proteins that bind and probably mediate the attachment of the 5S RNA into the large ribosomal subunit, where it forms part of the central protuberance. In the 70S ribosome it contacts protein S13 of the 30S subunit (bridge B1b), connecting the 2 subunits; this bridge is implicated in subunit movement. Contacts the P site tRNA; the 5S rRNA and some of its associated proteins might help stabilize positioning of ribosome-bound tRNAs. This Vibrio parahaemolyticus serotype O3:K6 (strain RIMD 2210633) protein is Large ribosomal subunit protein uL5.